The sequence spans 225 residues: PKHD-type hydroxylase YbiX (225 aa).

One can recognise a Fe2OG dioxygenase domain in the interval Thr-78–Ser-177. Fe cation contacts are provided by His-96, Asp-98, and His-158. Residue Arg-168 coordinates 2-oxoglutarate.

It depends on Fe(2+) as a cofactor. L-ascorbate is required as a cofactor.

The polypeptide is PKHD-type hydroxylase YbiX (Escherichia coli (strain SMS-3-5 / SECEC)).